The sequence spans 421 residues: Medium-chain specific acyl-CoA dehydrogenase, mitochondrial (421 aa).

The N-terminal 25 residues, 1–25, are a transit peptide targeting the mitochondrion; it reads MAAAFGRCCRVLRSISRFHWRSQHT. At Lys69 the chain carries N6-acetyllysine; alternate. Lys69 carries the N6-succinyllysine; alternate modification. 158–167 is an FAD binding site; sequence YCVTEPGAGS. Ser167 provides a ligand contact to octanoyl-CoA. Lys179 carries the N6-succinyllysine modification. Residue 191 to 193 coordinates FAD; that stretch reads WIT. An N6-acetyllysine; alternate mark is found at Lys212, Lys217, Lys259, and Lys271. 4 positions are modified to N6-succinyllysine; alternate: Lys212, Lys217, Lys259, and Lys271. Asp278 is an octanoyl-CoA binding site. Lys279 is subject to N6-acetyllysine. Arg281 is an octanoyl-CoA binding site. The residue at position 301 (Lys301) is an N6-acetyllysine. Residues 306 to 308 and 316 to 317 contribute to the FAD site; these read RKT and HQ. Arg349 and Thr351 together coordinate octanoyl-CoA. Residue Thr351 is modified to Phosphothreonine. 374-378 provides a ligand contact to FAD; that stretch reads QIFGG. Glu401 contributes to the octanoyl-CoA binding site. The Proton acceptor role is filled by Glu401. 402-405 contributes to the FAD binding site; the sequence is GTSQ.

This sequence belongs to the acyl-CoA dehydrogenase family. In terms of assembly, homotetramer. Interacts with the heterodimeric electron transfer flavoprotein ETF. Requires FAD as cofactor. In terms of processing, acetylated. Could occur at proximity of the cofactor-binding sites and reduce the catalytic activity. Could be deacetylated by SIRT3.

It is found in the mitochondrion matrix. The catalysed reaction is a medium-chain 2,3-saturated fatty acyl-CoA + oxidized [electron-transfer flavoprotein] + H(+) = a medium-chain (2E)-enoyl-CoA + reduced [electron-transfer flavoprotein]. It carries out the reaction pentanoyl-CoA + oxidized [electron-transfer flavoprotein] + H(+) = (2E)-pentenoyl-CoA + reduced [electron-transfer flavoprotein]. It catalyses the reaction hexanoyl-CoA + oxidized [electron-transfer flavoprotein] + H(+) = (2E)-hexenoyl-CoA + reduced [electron-transfer flavoprotein]. The enzyme catalyses octanoyl-CoA + oxidized [electron-transfer flavoprotein] + H(+) = (2E)-octenoyl-CoA + reduced [electron-transfer flavoprotein]. The catalysed reaction is decanoyl-CoA + oxidized [electron-transfer flavoprotein] + H(+) = (2E)-decenoyl-CoA + reduced [electron-transfer flavoprotein]. It carries out the reaction dodecanoyl-CoA + oxidized [electron-transfer flavoprotein] + H(+) = (2E)-dodecenoyl-CoA + reduced [electron-transfer flavoprotein]. It catalyses the reaction tetradecanoyl-CoA + oxidized [electron-transfer flavoprotein] + H(+) = (2E)-tetradecenoyl-CoA + reduced [electron-transfer flavoprotein]. The enzyme catalyses oxidized [electron-transfer flavoprotein] + hexadecanoyl-CoA + H(+) = (2E)-hexadecenoyl-CoA + reduced [electron-transfer flavoprotein]. It participates in lipid metabolism; mitochondrial fatty acid beta-oxidation. In terms of biological role, medium-chain specific acyl-CoA dehydrogenase is one of the acyl-CoA dehydrogenases that catalyze the first step of mitochondrial fatty acid beta-oxidation, an aerobic process breaking down fatty acids into acetyl-CoA and allowing the production of energy from fats. The first step of fatty acid beta-oxidation consists in the removal of one hydrogen from C-2 and C-3 of the straight-chain fatty acyl-CoA thioester, resulting in the formation of trans-2-enoyl-CoA. Electron transfer flavoprotein (ETF) is the electron acceptor that transfers electrons to the main mitochondrial respiratory chain via ETF-ubiquinone oxidoreductase (ETF dehydrogenase). Among the different mitochondrial acyl-CoA dehydrogenases, medium-chain specific acyl-CoA dehydrogenase acts specifically on acyl-CoAs with saturated 6 to 12 carbons long primary chains. This is Medium-chain specific acyl-CoA dehydrogenase, mitochondrial from Macaca fascicularis (Crab-eating macaque).